Here is a 146-residue protein sequence, read N- to C-terminus: MKASVVLSLLGYLVVPSGAYILGRCTVAKKLHDGGLDYFEGYSLENWVCLAYFESKFNPMAIYENTREGYTGFGLFQMRGSDWCGDHGRNRCHMSCSALLNPNLEKTIKCAKTIVKGKEGMGAWPTWSRYCQYSDTLARWLDGCKL.

The first 19 residues, 1–19, serve as a signal peptide directing secretion; the sequence is MKASVVLSLLGYLVVPSGA. Residues 20–146 enclose the C-type lysozyme domain; the sequence is YILGRCTVAK…LARWLDGCKL (127 aa). 4 disulfide bridges follow: cysteine 25–cysteine 144, cysteine 49–cysteine 131, cysteine 84–cysteine 96, and cysteine 92–cysteine 110. Glutamate 54 is an active-site residue.

This sequence belongs to the glycosyl hydrolase 22 family. Monomer. In terms of tissue distribution, expressed in testis and epididymis.

It is found in the secreted. Its subcellular location is the cytoplasmic vesicle. The protein resides in the secretory vesicle. It localises to the acrosome. The protein localises to the cell projection. It is found in the cilium. Its subcellular location is the flagellum. Its function is as follows. May be involved in fertilization. Has no detectable bacteriolytic and lysozyme activities in vitro. The sequence is that of Lysozyme-like protein 4 (LYZL4) from Homo sapiens (Human).